The chain runs to 642 residues: Frizzled-1 (642 aa).

The signal sequence occupies residues 1–68; the sequence is MAEEAAPSES…WLLEAPLLLG (68 aa). 2 disordered regions span residues 26 to 45 and 76 to 99; these read PGRR…RPRA and QVSG…QYNG. Residues 69-317 are Extracellular-facing; that stretch reads VRAQAAGQVS…PEELRFSRTW (249 aa). The region spanning 106–225 is the FZ domain; the sequence is PDHGYCQPIS…HGAGELCVGQ (120 aa). 5 disulfide bridges follow: cysteine 111-cysteine 172, cysteine 119-cysteine 165, cysteine 156-cysteine 193, cysteine 182-cysteine 222, and cysteine 186-cysteine 210. A glycan (N-linked (GlcNAc...) asparagine) is linked at asparagine 125. Asparagine 226 is a glycosylation site (N-linked (GlcNAc...) asparagine). The helical transmembrane segment at 318 to 338 threads the bilayer; the sequence is IGIWSVLCCASTLFTVLTYLV. Over 339 to 349 the chain is Cytoplasmic; it reads DMRRFSYPERP. A helical transmembrane segment spans residues 350–370; the sequence is IIFLSGCYTAVAVAYIAGFLL. At 371-397 the chain is on the extracellular side; it reads EDRVVCNDKFAEDGARTVAQGTKKEGC. A helical membrane pass occupies residues 398–418; that stretch reads TILFMMLYFFSMASSIWWVIL. At 419–440 the chain is on the cytoplasmic side; that stretch reads SLTWFLAAGMKWGHEAIEANSQ. A helical transmembrane segment spans residues 441–461; that stretch reads YFHLAAWAVPAIKTITILALG. Over 462–484 the chain is Extracellular; the sequence is QVDGDVLSGVCFVGLNNVDALRG. Residues 485–505 traverse the membrane as a helical segment; the sequence is FVLAPLFVYLFIGTSFLLAGF. Over 506-531 the chain is Cytoplasmic; sequence VSLFRIRTIMKHDGTKTEKLEKLMVR. A helical transmembrane segment spans residues 532–552; the sequence is IGVFSVLYTVPATIVIACYFY. Topologically, residues 553–593 are extracellular; it reads EQAFRDQWERSWVAQSCKSYAIPCPHLQGGGGVPPHPPMSP. Residues 594 to 614 form a helical membrane-spanning segment; the sequence is DFTVFMIKYLMTLIVGITSGF. Over 615–642 the chain is Cytoplasmic; sequence WIWSGKTLNSWRKFYTRLTNSKQGETTV. The short motif at 620–625 is the Lys-Thr-X-X-X-Trp motif, mediates interaction with the PDZ domain of Dvl family members element; it reads KTLNSW. Residues 640 to 642 carry the PDZ-binding motif; the sequence is TTV.

The protein belongs to the G-protein coupled receptor Fz/Smo family. As to quaternary structure, interacts with MYOC. Interacts with WNT7B. Ubiquitinated by ZNRF3, leading to its degradation by the proteasome. In terms of tissue distribution, expressed in chondrocytes.

It is found in the cell membrane. In terms of biological role, receptor for Wnt proteins. Activated by WNT7B. Activated by WNT3A, WNT3, WNT1 and to a lesser extent WNT2, but apparently not by WNT4, WNT5A, WNT5B, WNT6, WNT7A or WNT7B. Contradictory results showing activation by WNT7B have been described for mouse. Functions in the canonical Wnt/beta-catenin signaling pathway. The canonical Wnt/beta-catenin signaling pathway leads to the activation of disheveled proteins, inhibition of GSK-3 kinase, nuclear accumulation of beta-catenin and activation of Wnt target genes. A second signaling pathway involving PKC and calcium fluxes has been seen for some family members, but it is not yet clear if it represents a distinct pathway or if it can be integrated in the canonical pathway, as PKC seems to be required for Wnt-mediated inactivation of GSK-3 kinase. Both pathways seem to involve interactions with G-proteins. May be involved in transduction and intercellular transmission of polarity information during tissue morphogenesis and/or in differentiated tissues. In Mus musculus (Mouse), this protein is Frizzled-1 (Fzd1).